Here is a 122-residue protein sequence, read N- to C-terminus: UPF0102 protein CKL_1410 (122 aa).

It belongs to the UPF0102 family.

The chain is UPF0102 protein CKL_1410 from Clostridium kluyveri (strain ATCC 8527 / DSM 555 / NBRC 12016 / NCIMB 10680 / K1).